The following is a 1355-amino-acid chain: Patatin-like phospholipase domain-containing protein 6 (1355 aa).

At 1-43 (MGTPSHELNTTSSGAEVIQKTLEEGLGRRICVAQPVPFVPQVL) the chain is on the lumenal side. N-linked (GlcNAc...) asparagine glycosylation is present at asparagine 9. The chain crosses the membrane as a helical span at residues 44–64 (GVMIGAGVAVLVTAVLILLVV). Residues 65 to 1355 (RRLRVQKTPA…QETPSSVADA (1291 aa)) are Cytoplasmic-facing. Residue 179–306 (VLGHFEKPLF…VRVVQIIMVR (128 aa)) coordinates a nucleoside 3',5'-cyclic phosphate. Serine 338 carries the phosphoserine modification. Positions 338 to 395 (SPGLPTRTSPVRGSKRVVSTSGTEDTSKETSGRPLDSIGAPLPGPAGDPVKPTSLEAP) are disordered. Residues 343 to 361 (TRTSPVRGSKRVVSTSGTE) show a composition bias toward polar residues. Threonine 345 is modified (phosphothreonine). Serine 346, serine 356, and serine 405 each carry phosphoserine. A nucleoside 3',5'-cyclic phosphate-binding positions include 492–614 (ELAK…VAAR) and 610–730 (TVAA…LSQK). The PNPLA domain maps to 961–1127 (LVLGGGGARG…INNLPADIAR (167 aa)). The GXGXXG motif lies at 965-970 (GGGARG). A GXSXG motif is present at residues 992 to 996 (GTSIG). Serine 994 functions as the Nucleophile in the catalytic mechanism. The active-site Proton acceptor is aspartate 1114. The short motif at 1114–1116 (DGG) is the DGA/G element. A disordered region spans residues 1286–1355 (SYVSDGCADG…QETPSSVADA (70 aa)). Residues 1293–1309 (ADGEESDCLTEYEEDAG) are compositionally biased toward acidic residues.

The protein belongs to the NTE family. Post-translationally, glycosylated. As to expression, expressed in brain, testes and kidney (at protein level). Expressed ubiquitously in brain of young mice. Reaching adulthood, there is a most prominent expression in Purkinje cells, granule cells and pyramidal neurons of the hippocampus and some large neurons in the medulla oblongata, nucleus dentatus and pons.

It localises to the endoplasmic reticulum membrane. It carries out the reaction a 1-acyl-sn-glycero-3-phosphocholine + H2O = sn-glycerol 3-phosphocholine + a fatty acid + H(+). The catalysed reaction is 1-hexadecanoyl-sn-glycero-3-phosphocholine + H2O = sn-glycerol 3-phosphocholine + hexadecanoate + H(+). The enzyme catalyses 1-hexadecanoyl-sn-glycero-3-phosphate + H2O = sn-glycerol 3-phosphate + hexadecanoate + H(+). It catalyses the reaction 1-(9Z-octadecenoyl)-sn-glycero-3-phosphocholine + H2O = sn-glycerol 3-phosphocholine + (9Z)-octadecenoate + H(+). It carries out the reaction 1-hexadecanoylglycerol + H2O = glycerol + hexadecanoate + H(+). The catalysed reaction is 2-hexadecanoylglycerol + H2O = glycerol + hexadecanoate + H(+). The enzyme catalyses 1-(9Z-octadecenoyl)-glycerol + H2O = glycerol + (9Z)-octadecenoate + H(+). It catalyses the reaction 2-(9Z-octadecenoyl)-glycerol + H2O = glycerol + (9Z)-octadecenoate + H(+). It carries out the reaction 2-(5Z,8Z,11Z,14Z-eicosatetraenoyl)-glycerol + H2O = glycerol + (5Z,8Z,11Z,14Z)-eicosatetraenoate + H(+). Inhibited by a series a OPs such as mipafox (MPX), phenyl saligenin phosphate (PSP), phenyl dipentyl phosphinate (PDPP), diisopropyl fluorophosphate and paraoxon. Functionally, phospholipase B that deacylates intracellular phosphatidylcholine (PtdCho), generating glycerophosphocholine (GroPtdCho). This deacylation occurs at both sn-2 and sn-1 positions of PtdCho. Catalyzes the hydrolysis of several naturally occurring membrane-associated lipids. Hydrolyzes lysophospholipids and monoacylglycerols, preferring the 1-acyl to the 2-acyl isomer. Does not catalyze hydrolysis of di- or triacylglycerols or fatty acid amides. In Mus musculus (Mouse), this protein is Patatin-like phospholipase domain-containing protein 6 (Pnpla6).